The following is a 128-amino-acid chain: Small ribosomal subunit protein uS12 (128 aa).

A 3-methylthioaspartic acid modification is found at Asp-89. The segment at 101–128 is disordered; that stretch reads SLDTSGVADRRQGRSKYGAKRPKGAAAK. The span at 113–128 shows a compositional bias: basic residues; that stretch reads GRSKYGAKRPKGAAAK.

This sequence belongs to the universal ribosomal protein uS12 family. Part of the 30S ribosomal subunit. Contacts proteins S8 and S17. May interact with IF1 in the 30S initiation complex.

With S4 and S5 plays an important role in translational accuracy. Its function is as follows. Interacts with and stabilizes bases of the 16S rRNA that are involved in tRNA selection in the A site and with the mRNA backbone. Located at the interface of the 30S and 50S subunits, it traverses the body of the 30S subunit contacting proteins on the other side and probably holding the rRNA structure together. The combined cluster of proteins S8, S12 and S17 appears to hold together the shoulder and platform of the 30S subunit. The chain is Small ribosomal subunit protein uS12 from Prosthecochloris aestuarii (strain DSM 271 / SK 413).